Consider the following 89-residue polypeptide: Small ribosomal subunit protein uS15 (89 aa).

This sequence belongs to the universal ribosomal protein uS15 family. In terms of assembly, part of the 30S ribosomal subunit. Forms a bridge to the 50S subunit in the 70S ribosome, contacting the 23S rRNA.

In terms of biological role, one of the primary rRNA binding proteins, it binds directly to 16S rRNA where it helps nucleate assembly of the platform of the 30S subunit by binding and bridging several RNA helices of the 16S rRNA. Its function is as follows. Forms an intersubunit bridge (bridge B4) with the 23S rRNA of the 50S subunit in the ribosome. This is Small ribosomal subunit protein uS15 from Pseudomonas putida (strain GB-1).